Reading from the N-terminus, the 388-residue chain is UTP--glucose-1-phosphate uridylyltransferase (388 aa).

Asp-118 contacts Mg(2+).

The protein belongs to the CugP-type UDP-glucose pyrophosphorylase family. The cofactor is Mg(2+).

The enzyme catalyses alpha-D-glucose 1-phosphate + UTP + H(+) = UDP-alpha-D-glucose + diphosphate. Functionally, catalyzes the formation of UDP-glucose, from UTP and glucose 1-phosphate. Is highly specific since it cannot use other NTPs such as dTTP, CTP, ATP, and GTP, and other sugar-1P such as GlcNAc-1P, Gal-1P, and Man-1P, as substrates. Has probably a central and essential role as the substrate supplier for galactolipid synthesis; galactolipids are major constituents of the photosynthetic thylakoid membrane and important for photosynthetic activity. The protein is UTP--glucose-1-phosphate uridylyltransferase of Synechocystis sp. (strain ATCC 27184 / PCC 6803 / Kazusa).